Reading from the N-terminus, the 96-residue chain is MDKPKQSFRRHFKPIRRRFKPIRRYLKPIRRHLSPIRSGDRIDYKNMSLISRFISEQGKILSGRVNRLTSKQQRLMTNAIKRARILSLLPFLYNEN.

This sequence belongs to the bacterial ribosomal protein bS18 family. As to quaternary structure, part of the 30S ribosomal subunit.

It localises to the plastid. It is found in the chloroplast. This Pinus thunbergii (Japanese black pine) protein is Small ribosomal subunit protein bS18c (rps18).